Consider the following 1650-residue polypeptide: Transmembrane domain-containing protein DDB_G0287209 (1650 aa).

Residues 194–225 (NNNNNNFNNNNNNNNNNNNNKNNYNNNKSNLI) are a coiled coil. Disordered stretches follow at residues 197 to 216 (NNNF…NKNN) and 1218 to 1296 (ENQF…NINN). The segment covering 1224–1284 (NNNENSGSSG…SNSNENNYNG (61 aa)) has biased composition (low complexity). The next 9 helical transmembrane spans lie at 1314–1334 (PLLL…LSLF), 1347–1369 (ILFL…LQLF), 1390–1410 (ISIS…DVTS), 1454–1474 (WNIY…LIVP), 1489–1509 (ILFI…VILF), 1515–1535 (WWDL…VTLL), 1539–1559 (PVYF…QFAF), 1570–1590 (VENL…TSII), and 1595–1615 (FNLI…ITII).

It localises to the membrane. This is Transmembrane domain-containing protein DDB_G0287209 from Dictyostelium discoideum (Social amoeba).